Consider the following 313-residue polypeptide: Ribosomal RNA small subunit methyltransferase H (313 aa).

S-adenosyl-L-methionine-binding positions include 35-37, D55, F81, D103, and Q110; that span reads GGH.

Belongs to the methyltransferase superfamily. RsmH family.

It localises to the cytoplasm. It carries out the reaction cytidine(1402) in 16S rRNA + S-adenosyl-L-methionine = N(4)-methylcytidine(1402) in 16S rRNA + S-adenosyl-L-homocysteine + H(+). Functionally, specifically methylates the N4 position of cytidine in position 1402 (C1402) of 16S rRNA. The sequence is that of Ribosomal RNA small subunit methyltransferase H from Azotobacter vinelandii (strain DJ / ATCC BAA-1303).